A 503-amino-acid polypeptide reads, in one-letter code: ATP synthase subunit alpha (503 aa).

170–177 (GDKQTGKT) serves as a coordination point for ATP.

Belongs to the ATPase alpha/beta chains family. F-type ATPases have 2 components, CF(1) - the catalytic core - and CF(0) - the membrane proton channel. CF(1) has five subunits: alpha(3), beta(3), gamma(1), delta(1), epsilon(1). CF(0) has three main subunits: a(1), b(2) and c(9-12). The alpha and beta chains form an alternating ring which encloses part of the gamma chain. CF(1) is attached to CF(0) by a central stalk formed by the gamma and epsilon chains, while a peripheral stalk is formed by the delta and b chains.

It is found in the cell inner membrane. It catalyses the reaction ATP + H2O + 4 H(+)(in) = ADP + phosphate + 5 H(+)(out). Functionally, produces ATP from ADP in the presence of a proton gradient across the membrane. The alpha chain is a regulatory subunit. The protein is ATP synthase subunit alpha of Helicobacter pylori (strain P12).